A 221-amino-acid polypeptide reads, in one-letter code: U1 small nuclear ribonucleoprotein C (221 aa).

The segment at 4-36 adopts a Matrin-type zinc-finger fold; it reads YFCDYCDTYLTHDSPSVRKTHCNGRKHKENVRV. Residues 100 to 168 form a disordered region; sequence SNPFPTSQAG…PPGAPTLPQP (69 aa). The segment covering 134-166 has biased composition (pro residues); it reads APAPPRMPGPLLMTPPPGAAAPGMAPPGAPTLP.

It belongs to the U1 small nuclear ribonucleoprotein C family. U1 snRNP is composed of the 7 core Sm proteins B/B', D1, D2, D3, E, F and G that assemble in a heptameric protein ring on the Sm site of the small nuclear RNA to form the core snRNP, and at least 3 U1 snRNP-specific proteins U1-70K, U1-A and U1-C. U1-C interacts with U1 snRNA and the 5' splice-site region of the pre-mRNA.

The protein localises to the nucleus. Functionally, component of the spliceosomal U1 snRNP, which is essential for recognition of the pre-mRNA 5' splice-site and the subsequent assembly of the spliceosome. U1-C is directly involved in initial 5' splice-site recognition for both constitutive and regulated alternative splicing. The interaction with the 5' splice-site seems to precede base-pairing between the pre-mRNA and the U1 snRNA. Stimulates commitment or early (E) complex formation by stabilizing the base pairing of the 5' end of the U1 snRNA and the 5' splice-site region. This is U1 small nuclear ribonucleoprotein C from Branchiostoma floridae (Florida lancelet).